Consider the following 358-residue polypeptide: Alpha-ketoglutarate-dependent L-arginine hydroxylase (358 aa).

Residues 1 to 21 (MTESPTTHHGAAPPDSVATPV) form a disordered region. Residues 117–135 (LSFLLMLYAGLLGDVFGWA) traverse the membrane as a helical segment. Position 156-158 (156-158 (LVS)) interacts with L-arginine. Positions 168 and 170 each coordinate Fe cation. A 2-oxoglutarate-binding site is contributed by T194. 268–270 (DGD) is a binding site for L-arginine. A Fe cation-binding site is contributed by H316. R330 and R334 together coordinate 2-oxoglutarate. R334 is an L-arginine binding site.

The protein belongs to the clavaminate synthase family. It depends on Fe cation as a cofactor.

Its subcellular location is the membrane. It carries out the reaction L-arginine + 2-oxoglutarate + O2 = (2S,3S)-hydroxyarginine + succinate + CO2. It functions in the pathway antibiotic biosynthesis. Functionally, involved in the biosynthesis of capreomycidine, an unusual amino acid used by non-ribosomal peptide synthases (NRPS) to make the tuberactinomycin class of peptide antibiotics such as viomycin and capreomycin. Catalyzes the stereospecific hydroxylation of the C3 of (2S)-arginine to generate (3S)-hydroxy-(2S)-arginine. Usually clavaminic acid synthase-like oxygenases catalyze the formation of threo diastereomers, however VioC produces the erythro diastereomer of beta-carbon-hydroxylated L-arginine. It exerts a broad substrate specificity by accepting the analogs L-homoarginine and L-canavanine for the beta-carbon hydroxylation. The polypeptide is Alpha-ketoglutarate-dependent L-arginine hydroxylase (vioC) (Streptomyces vinaceus).